The sequence spans 377 residues: Apelin receptor (377 aa).

Topologically, residues 1–28 are extracellular; that stretch reads MEDDGYNYYGADNQSECDYADWKPSGAL. Asparagine 13 is a glycosylation site (N-linked (GlcNAc...) asparagine). Disulfide bonds link cysteine 17–cysteine 279 and cysteine 100–cysteine 179. Residues 29 to 52 traverse the membrane as a helical segment; that stretch reads IPAIYMLVFLLGTTGNGLVLWTVF. Over 53–62 the chain is Cytoplasmic; that stretch reads RTSREKRRSA. The helical transmembrane segment at 63 to 84 threads the bilayer; it reads DIFIASLAVADLTFVVTLPLWA. Residues 85–97 are Extracellular-facing; the sequence is TYTYREFDWPFGT. A helical membrane pass occupies residues 98–123; the sequence is FSCKLSSYLIFVNMYASVFCLTGLSF. Topologically, residues 124–144 are cytoplasmic; sequence DRYLAIVRPVANARLRLRVSG. A helical membrane pass occupies residues 145–162; it reads AVATAVLWVLAALLAVPV. At 163 to 196 the chain is on the extracellular side; the sequence is MVFRSTDASENGTKIQCYMDYSMVATSNSEWAWE. The N-linked (GlcNAc...) asparagine glycan is linked to asparagine 173. The helical transmembrane segment at 197–221 threads the bilayer; the sequence is VGLGVSSTAVGFVVPFTIMLTCYFF. The Cytoplasmic segment spans residues 222-244; that stretch reads IAQTIAGHFRKERIEGLRKRRRL. The helical transmembrane segment at 245–268 threads the bilayer; sequence LSIIVVLVVTFALCWMPYHLVKTL. At 269–287 the chain is on the extracellular side; that stretch reads YMLGSLLHWPCDFDIFLMN. The helical transmembrane segment at 288–310 threads the bilayer; it reads VFPYCTCISYVNSCLNPFLYAFF. Residues 311 to 377 lie on the Cytoplasmic side of the membrane; that stretch reads DPRFRQACTS…IPYSQETLVD (67 aa). Positions 334–377 are disordered; the sequence is HSSSAEKSASYSSGHSQGPGPNMGKGGEQMHEKSIPYSQETLVD. Low complexity predominate over residues 335–349; the sequence is SSSAEKSASYSSGHS.

It belongs to the G-protein coupled receptor 1 family. As to quaternary structure, homodimer; dimerization inhibits APLNR-mediated G protein and beta-arrestin signaling pathways compared to monomeric APLNR. In terms of tissue distribution, expressed in coronary endothelial cells (at protein level). Expressed in the embryo, allantoic and endothelial precursor cells of the yolk sac at 8 days post-coitum (dpc). Expressed in the secondary heart field and somite at 8.25 dpc. Expressed in fetal allantoic endothelial cells at 9 dpc. Expressed in the allantoid and the invading fetal vasculature of the placenta at 9.5 dpc. Expressed in endothelial cells adjacent to syncytiotrophoblast cells at 10.5 dpc. Expressed weakly in the embryonic heart at 11.5 dpc. Expressed in the adult heart. Expressed in endothelial cells and cardiomyocytes and weakly expressed in fibroblasts.

The protein localises to the cell membrane. In terms of biological role, g protein-coupled receptor for peptide hormones apelin (APLN) and apelin receptor early endogenous ligand (APELA), that plays a role in the regulation of normal cardiovascular function and fluid homeostasis. When acting as apelin receptor, activates both G(i) protein pathway that inhibits adenylate cyclase activity, and the beta-arrestin pathway leading to internalization of the receptor. APLNR/APJ receptor is also activated by mechanical strech in a G-protein-independent fashion to induce beta-arrestin signaling leading to cardiac hypertrophy. However, the presence of apelin ligand blunts cardiac hypertrophic induction from APLNR/APJ on response to pathological stimuli. Plays a key role in early development such as gastrulation, blood vessels formation and heart morphogenesis by acting as a receptor for APELA hormone. May promote angioblast migration toward the embryonic midline, i.e. the position of the future vessel formation, during vasculogenesis. Promotes sinus venosus (SV)-derived endothelial cells migration into the developing heart to promote coronary blood vessel development. Also plays a role in various processes in adults such as regulation of blood vessel formation, blood pressure and heart contractility and protection from cardiac hypertrophy and heart failure. This Mus musculus (Mouse) protein is Apelin receptor.